The primary structure comprises 665 residues: GRB2-associated-binding protein 2 (665 aa).

Ser2 is subject to Phosphoserine. Residues 8–119 form the PH domain; it reads DVVCTGWLRK…WVQSICQICG (112 aa). The disordered stretch occupies residues 131–184; it reads RNLSSASHGPRSSPAEFSSSQHLLRERKSSAPSHSSQPTLFTFEPPVSSHMQPT. A phosphoserine mark is found at Ser135, Ser142, Ser143, Ser149, Ser150, Ser160, Ser165, Ser211, Ser220, and Ser261. The segment covering 160–170 has biased composition (polar residues); the sequence is SAPSHSSQPTL. Thr262 carries the post-translational modification Phosphothreonine. At Tyr263 the chain carries Phosphotyrosine. Thr275 is modified (phosphothreonine). Residues Ser278 and Ser282 each carry the phosphoserine modification. Thr284 is modified (phosphothreonine). Position 290 is a phosphotyrosine (Tyr290). At Thr328 the chain carries Phosphothreonine. Residues 338-396 form a disordered region; sequence VATPGDSAIAPPPRPPKPSQAETSQWGSIQQRPPISENSRSVAATIPRRNTLPAMDNSR. The SH3-binding motif lies at 348-355; it reads PPPRPPKP. Over residues 357-379 the composition is skewed to polar residues; sequence QAETSQWGSIQQRPPISENSRSV. Ser365 is modified (phosphoserine). Phosphothreonine occurs at positions 382 and 388. Ser402 bears the Phosphoserine mark. Thr405 carries the post-translational modification Phosphothreonine. The disordered stretch occupies residues 408–445; the sequence is YPARGSGESASWSAEPPGKTAVGRSNSASSDDNYVPMN. Position 420 is a phosphoserine (Ser420). The segment covering 430 to 439 has biased composition (polar residues); that stretch reads GRSNSASSDD. Phosphotyrosine is present on Tyr441. Phosphoserine is present on Ser469. The disordered stretch occupies residues 491-517; it reads PSRGSEIQPPPVNRNLKPDRKAKPTPL. The SH3-binding motif lies at 499 to 508; it reads PPPVNRNLKP. Ser532 bears the Phosphoserine mark. Composition is skewed to polar residues over residues 548–566 and 578–600; these read SSSQYCRPISTQSITSTDS and NPVSASPVPSGTNSPAPKKSTGS. 2 disordered regions span residues 548–632 and 646–665; these read SSSQ…KVDY and TMQEWTDVRQSSEPSKGAKL. A Phosphoserine modification is found at Ser612. A Phosphotyrosine modification is found at Tyr632. The segment covering 646–659 has biased composition (polar residues); that stretch reads TMQEWTDVRQSSEP.

The protein belongs to the GAB family. As to quaternary structure, part of a complex composed of EEIG1, TNFRSF11A/RANK, PLCG2, GAB2, TEC and BTK; complex formation increases in the presence of TNFSF11/RANKL. Interacts with HCK. Interacts with SHC1; may mediate interaction with receptors. Interacts with SYK. Interacts with PI-3 kinase. Interacts with GRB2 (via SH3 2 domain). Interacts (phosphorylated) with PTPN11. Interacts with TNFRSF11A (via cytoplasmic domain). Interacts (phosphorylated) with 14-3-3 family proteins SFN, YWHAB, YWHAE, YWHAG, YWHAH, YWHAQ and YWHAZ; prevents interaction with GRB2 and attenuates GAB2 signaling. In terms of processing, phosphorylated upon EGF stimulation. Phosphorylated on tyrosine residues by HCK upon IL6 signaling. Phosphorylated on tyrosine residue(s) by the thrombopoietin receptor (TPOR), stem cell factor receptor (SCFR), and T-cell and B-cell antigen receptors, gp130, IL-2R and IL-3R. Phosphorylated upon stimulation of TNFRSF11A/RANK by TNFSF11/RANKL. Post-translationally, dephosphorylated by PTPN11. As to expression, ubiquitously expressed.

Its subcellular location is the cytoplasm. It is found in the cell membrane. It localises to the membrane raft. Functionally, adapter protein which acts downstream of several membrane receptors including cytokine, antigen, hormone, cell matrix and growth factor receptors to regulate multiple signaling pathways. Regulates osteoclast differentiation mediating the TNFRSF11A/RANK signaling. In allergic response, it plays a role in mast cells activation and degranulation through PI-3-kinase regulation. Also involved in the regulation of cell proliferation and hematopoiesis. This is GRB2-associated-binding protein 2 (Gab2) from Mus musculus (Mouse).